The chain runs to 207 residues: Guanylate kinase (207 aa).

In terms of domain architecture, Guanylate kinase-like spans 6–185 (GLLIVLSGPS…AKNRIQCIVE (180 aa)). An ATP-binding site is contributed by 13-20 (GPSGVGKG).

Belongs to the guanylate kinase family.

Its subcellular location is the cytoplasm. The catalysed reaction is GMP + ATP = GDP + ADP. Functionally, essential for recycling GMP and indirectly, cGMP. This chain is Guanylate kinase, found in Staphylococcus aureus (strain bovine RF122 / ET3-1).